A 260-amino-acid polypeptide reads, in one-letter code: Triosephosphate isomerase (260 aa).

Residue 11-13 (NWK) participates in substrate binding. Histidine 103 serves as the catalytic Electrophile. The Proton acceptor role is filled by glutamate 175. Substrate contacts are provided by residues glycine 181, serine 220, and 241–242 (GG).

This sequence belongs to the triosephosphate isomerase family. As to quaternary structure, homodimer.

It is found in the cytoplasm. The enzyme catalyses D-glyceraldehyde 3-phosphate = dihydroxyacetone phosphate. It functions in the pathway carbohydrate biosynthesis; gluconeogenesis. Its pathway is carbohydrate degradation; glycolysis; D-glyceraldehyde 3-phosphate from glycerone phosphate: step 1/1. In terms of biological role, involved in the gluconeogenesis. Catalyzes stereospecifically the conversion of dihydroxyacetone phosphate (DHAP) to D-glyceraldehyde-3-phosphate (G3P). This Shewanella frigidimarina (strain NCIMB 400) protein is Triosephosphate isomerase.